The chain runs to 1490 residues: MKHLKGLLLPALLALASSAAAKDPLVETTPFKNELVNLMYFDDSGVALVQELDNGKIFRSHDAGKGWKEIKNVKGLGIMKSPYDNKVALILGEKKHWITFDQGENWDSFETELPPSPQSPVGWHAQDNKKILLNEIENCFTAPCLGRTYYTTDGFKTDPKVLVDNRRMCQWAKASERFLQGMDKHDDRILCITRGKYSDRSKDFRLLMSDNFFKETEEPVMSSGRTVQGMANMAAVKGYIVAAAKAEHSSELALYVTQDTDSWHHALFGDHKIEEDAYTILESTNYSIQVDVMTSKYVTMGNLYTSNSNGTYFTKNVEHTNRNEAGYVDFEKIANIQGVVLVNTVDNYKEVEKSGQSKKLKSRISFDDGRSFEKLTVKGKDGELHLHSVTNLHNSGRVFSSPAPGIVMGVGNTGEFLGKYTDGDLYVSDDAGLTWELALEEAHKYEFGDQGSVLVAVFDEGDTDEIRYSFKHGRKDSWQKIKLDYKIRARELTTLPDSTSLKFIVYASRKKDGGGREHVIVHLDFSDILKKCGDSDFDDEWSVRKDADGDPSCVMGHKQLFRRRKWDAECSIGELFKDPVPKFKPCDCDKFRDYECDFNFTPAGEGKEKKCEPGESFSLPKGACDGDAKSYKGSSGWRKIPGNQCKGETERDKQVERECKDAERPRPKTDKITSEITKFKGSNFMEQYYLERNTQSDGKDNERDKDETVVMLTDERTAYITHDHGKKWKKAVDDEIVRIYPHQYETNNVYFLTASKKVYYSKDRGLHDSINSFEAPVMPNTDMLPIMQFHPKQKDWIIWLGGKNCEKVGNKDCHTVAYVSQKNGEDSSWESLVPFVKKCAFVWREAGRSVKEEQVFCEQHTNEEKNAPLELISSDDWFKKKDVKFKSVVEFATMSEFIIVATKAEDNTLRLDASLDAHTFAEAKFPPKFFDIHQTAYTVLDSSTHAVFLHVTVNPQRDQEYGSIIKSNSNGTSYVMSLAAVNRNSEGYVDFEKMQGLEGVAVANVVVNVDEVNKGSKKKKQSRITHNDGADWEPLQAPEKDSDDKPYDCDVANREKCGLHIHGYTERADPREMYSSPTAVGLMLAVGNVGPELSTFGEANTFMTTDAGITWKEIKKGTYAWEFGDQGSVIVIVRRGEDTDHVYYSTDSGAKWDLYQFADHKMRVEAITTVPSDTSLNFLLWGKDSKELFAVNLDFSGLPEFQKECKLDEHDPTKGDYDLWSPQHPLQQDEPECLFGHVAQYHRKKRDVKCRNGQRIDQMHDIARNCSCTRRDYECAYNYERDSSGDCVLVPGLSLPDPSKVCSNKNVKEYYANTRFRKIPLSTCQGGTEYDKTGDVHPCPGFEEDFQKNHGVGGFTLFLAIVLPFAAAGGVGYWVWRNWDGKFGRIRLGEPGGGSAFDSDAPWVRWPIAAVSGLVAVIAALPLVVGSVWRWVAGRMGGGGGAGGYAGLGGSGYGRAYTSRSSFARGRGEYSVVDPDEGELLGDEESDEDV.

The first 21 residues, 1-21 (MKHLKGLLLPALLALASSAAA), serve as a signal peptide directing secretion. Residues 22-1354 (KDPLVETTPF…DFQKNHGVGG (1333 aa)) are Lumenal-facing. The BNR 1 repeat unit spans residues 97–107 (WITFDQGENWD). Residues Asn285 and Asn309 are each glycosylated (N-linked (GlcNAc...) asparagine). BNR repeat units follow at residues 364–374 (ISFDDGRSFEK), 426–436 (YVSDDAGLTWE), and 719–730 (YITHDHGKKWKK). N-linked (GlcNAc...) asparagine glycosylation is present at Asn970. Positions 1016–1048 (SKKKKQSRITHNDGADWEPLQAPEKDSDDKPYD) are disordered. Residues 1038–1048 (PEKDSDDKPYD) show a composition bias toward basic and acidic residues. 2 BNR repeats span residues 1102–1112 (FMTTDAGITWK) and 1143–1153 (YYSTDSGAKWD). Asn1265 carries N-linked (GlcNAc...) asparagine glycosylation. The chain crosses the membrane as a helical span at residues 1355–1375 (FTLFLAIVLPFAAAGGVGYWV). At 1376 to 1405 (WRNWDGKFGRIRLGEPGGGSAFDSDAPWVR) the chain is on the cytoplasmic side. A helical transmembrane segment spans residues 1406–1426 (WPIAAVSGLVAVIAALPLVVG). Residues 1427–1490 (SVWRWVAGRM…LGDEESDEDV (64 aa)) are Lumenal-facing. The segment at 1465–1490 (RGRGEYSVVDPDEGELLGDEESDEDV) is disordered. Positions 1474–1490 (DPDEGELLGDEESDEDV) are enriched in acidic residues.

Belongs to the VPS10-related sortilin family.

It localises to the golgi apparatus. Its subcellular location is the trans-Golgi network membrane. The protein resides in the prevacuolar compartment membrane. Functions as a sorting receptor in the Golgi compartment required for the intracellular sorting and delivery of soluble vacuolar proteins, like carboxypeptidase Y (CPY) and proteinase A. Executes multiple rounds of sorting by cycling between the late Golgi and a prevacuolar endosome-like compartment. The polypeptide is Vacuolar protein sorting/targeting protein 10 (vps10) (Pyrenophora teres f. teres (strain 0-1) (Barley net blotch fungus)).